Reading from the N-terminus, the 185-residue chain is Peptidyl-tRNA hydrolase (185 aa).

Tyr-14 contributes to the tRNA binding site. Catalysis depends on His-19, which acts as the Proton acceptor. The tRNA site is built by Tyr-64, Asn-66, and Asn-112.

This sequence belongs to the PTH family. As to quaternary structure, monomer.

It localises to the cytoplasm. It catalyses the reaction an N-acyl-L-alpha-aminoacyl-tRNA + H2O = an N-acyl-L-amino acid + a tRNA + H(+). Hydrolyzes ribosome-free peptidyl-tRNAs (with 1 or more amino acids incorporated), which drop off the ribosome during protein synthesis, or as a result of ribosome stalling. Functionally, catalyzes the release of premature peptidyl moieties from peptidyl-tRNA molecules trapped in stalled 50S ribosomal subunits, and thus maintains levels of free tRNAs and 50S ribosomes. In Lactobacillus helveticus (strain DPC 4571), this protein is Peptidyl-tRNA hydrolase.